Here is a 303-residue protein sequence, read N- to C-terminus: Acetaldehyde dehydrogenase 1 (303 aa).

Cysteine 130 acts as the Acyl-thioester intermediate in catalysis. Residues 161 to 169 and asparagine 272 contribute to the NAD(+) site; that span reads SVGPGTRKN.

The protein belongs to the acetaldehyde dehydrogenase family.

It catalyses the reaction acetaldehyde + NAD(+) + CoA = acetyl-CoA + NADH + H(+). The sequence is that of Acetaldehyde dehydrogenase 1 from Cupriavidus metallidurans (strain ATCC 43123 / DSM 2839 / NBRC 102507 / CH34) (Ralstonia metallidurans).